A 79-amino-acid polypeptide reads, in one-letter code: Large ribosomal subunit protein uL24 (79 aa).

This sequence belongs to the universal ribosomal protein uL24 family. As to quaternary structure, part of the 50S ribosomal subunit.

One of two assembly initiator proteins, it binds directly to the 5'-end of the 23S rRNA, where it nucleates assembly of the 50S subunit. In terms of biological role, one of the proteins that surrounds the polypeptide exit tunnel on the outside of the subunit. The sequence is that of Large ribosomal subunit protein uL24 from Aliarcobacter butzleri (strain RM4018) (Arcobacter butzleri).